Here is a 209-residue protein sequence, read N- to C-terminus: Ribosomal RNA large subunit methyltransferase E (209 aa).

Gly63, Trp65, Asp83, Asp99, and Asp124 together coordinate S-adenosyl-L-methionine. The active-site Proton acceptor is the Lys164.

Belongs to the class I-like SAM-binding methyltransferase superfamily. RNA methyltransferase RlmE family.

It is found in the cytoplasm. The enzyme catalyses uridine(2552) in 23S rRNA + S-adenosyl-L-methionine = 2'-O-methyluridine(2552) in 23S rRNA + S-adenosyl-L-homocysteine + H(+). Functionally, specifically methylates the uridine in position 2552 of 23S rRNA at the 2'-O position of the ribose in the fully assembled 50S ribosomal subunit. The protein is Ribosomal RNA large subunit methyltransferase E of Vibrio parahaemolyticus serotype O3:K6 (strain RIMD 2210633).